The following is a 285-amino-acid chain: OPEP-3 protein (285 aa).

This is OPEP-3 protein (OPEP-3) from Orgyia pseudotsugata multicapsid polyhedrosis virus (OpMNPV).